Reading from the N-terminus, the 360-residue chain is Blue-light-activated histidine kinase 1 (360 aa).

Residues 38–109 (LFLETTQQTR…KLREGIAAER (72 aa)) form the PAS domain. S-4a-FMN cysteine is present on cysteine 85. One can recognise a PAC domain in the interval 109–163 (RYTVVDLLNYRKDGIPFWNAVHVGPIYGEDGTLQYFYGSQWDITDIVAERRKAET). A Phosphohistidine; by autocatalysis modification is found at histidine 173. Positions 260–303 (RSVTALGLALHELATNAVKYGALSVDAGRVEISWSREDGDVTLV) are HWE histidine kinase domain.

In terms of processing, FMN binds covalently to cysteine after exposure to blue light and this bond is spontaneously broken in the dark.

The enzyme catalyses ATP + protein L-histidine = ADP + protein N-phospho-L-histidine.. Its function is as follows. Photosensitive kinase that is involved in increased bacterial virulence upon exposure to light. This chain is Blue-light-activated histidine kinase 1, found in Erythrobacter litoralis (strain HTCC2594).